We begin with the raw amino-acid sequence, 341 residues long: L-threonine 3-dehydrogenase (341 aa).

Zn(2+) is bound at residue Cys-38. Residues Thr-40 and His-43 each act as charge relay system in the active site. Zn(2+) is bound by residues His-63, Glu-64, Cys-93, Cys-96, Cys-99, and Cys-107. NAD(+) is bound by residues Ile-175, Asp-195, Arg-200, 262–264, and 286–287; these read LGI and IY.

The protein belongs to the zinc-containing alcohol dehydrogenase family. As to quaternary structure, homotetramer. Requires Zn(2+) as cofactor.

Its subcellular location is the cytoplasm. It catalyses the reaction L-threonine + NAD(+) = (2S)-2-amino-3-oxobutanoate + NADH + H(+). The protein operates within amino-acid degradation; L-threonine degradation via oxydo-reductase pathway; glycine from L-threonine: step 1/2. In terms of biological role, catalyzes the NAD(+)-dependent oxidation of L-threonine to 2-amino-3-ketobutyrate. This chain is L-threonine 3-dehydrogenase, found in Escherichia coli O139:H28 (strain E24377A / ETEC).